The chain runs to 643 residues: 1-deoxy-D-xylulose-5-phosphate synthase (643 aa).

Thiamine diphosphate contacts are provided by residues His-78 and 119–121; that span reads AHS. Residue Asp-150 coordinates Mg(2+). Residues 151-152, Asn-179, Tyr-288, and Glu-370 contribute to the thiamine diphosphate site; that span reads GS. Residue Asn-179 participates in Mg(2+) binding.

It belongs to the transketolase family. DXPS subfamily. In terms of assembly, homodimer. The cofactor is Mg(2+). Requires thiamine diphosphate as cofactor.

The catalysed reaction is D-glyceraldehyde 3-phosphate + pyruvate + H(+) = 1-deoxy-D-xylulose 5-phosphate + CO2. It participates in metabolic intermediate biosynthesis; 1-deoxy-D-xylulose 5-phosphate biosynthesis; 1-deoxy-D-xylulose 5-phosphate from D-glyceraldehyde 3-phosphate and pyruvate: step 1/1. Functionally, catalyzes the acyloin condensation reaction between C atoms 2 and 3 of pyruvate and glyceraldehyde 3-phosphate to yield 1-deoxy-D-xylulose-5-phosphate (DXP). This chain is 1-deoxy-D-xylulose-5-phosphate synthase, found in Brucella abortus (strain 2308).